The following is a 351-amino-acid chain: Beta-hexosaminidase (351 aa).

Substrate contacts are provided by residues Asp-62, Arg-70, Arg-133, and 163–164 (KH). His-176 serves as the catalytic Proton donor/acceptor. Residue Asp-248 is the Nucleophile of the active site.

It belongs to the glycosyl hydrolase 3 family. NagZ subfamily. Monomer.

It localises to the cytoplasm. The enzyme catalyses Hydrolysis of terminal non-reducing N-acetyl-D-hexosamine residues in N-acetyl-beta-D-hexosaminides.. It participates in cell wall biogenesis; peptidoglycan recycling. Plays a role in peptidoglycan recycling by cleaving the terminal beta-1,4-linked N-acetylglucosamine (GlcNAc) from peptide-linked peptidoglycan fragments, giving rise to free GlcNAc, anhydro-N-acetylmuramic acid and anhydro-N-acetylmuramic acid-linked peptides. The chain is Beta-hexosaminidase from Haemophilus influenzae (strain ATCC 51907 / DSM 11121 / KW20 / Rd).